The sequence spans 294 residues: Diaminopimelate epimerase (294 aa).

Positions 11 and 78 each coordinate substrate. C87 functions as the Proton donor in the catalytic mechanism. Substrate is bound by residues 88 to 89 (GN), N167, N203, and 221 to 222 (ER). The active-site Proton acceptor is the C230. A substrate-binding site is contributed by 231-232 (GT).

Belongs to the diaminopimelate epimerase family. In terms of assembly, homodimer.

The protein localises to the cytoplasm. It catalyses the reaction (2S,6S)-2,6-diaminopimelate = meso-2,6-diaminopimelate. It functions in the pathway amino-acid biosynthesis; L-lysine biosynthesis via DAP pathway; DL-2,6-diaminopimelate from LL-2,6-diaminopimelate: step 1/1. Functionally, catalyzes the stereoinversion of LL-2,6-diaminopimelate (L,L-DAP) to meso-diaminopimelate (meso-DAP), a precursor of L-lysine and an essential component of the bacterial peptidoglycan. This is Diaminopimelate epimerase from Mycobacterium avium (strain 104).